The chain runs to 23 residues: Protein DCL, chloroplastic (23 aa).

The protein resides in the plastid. It is found in the chloroplast. In terms of biological role, has a function in the early stage of chloroplast development and palisade cell morphogenesis. The protein is Protein DCL, chloroplastic of Pseudotsuga menziesii (Douglas-fir).